The sequence spans 51 residues: Putative ribosomal protein eL39-like 5 (51 aa).

The protein belongs to the eukaryotic ribosomal protein eL39 family.

The sequence is that of Putative ribosomal protein eL39-like 5 (RPL39P5) from Homo sapiens (Human).